Consider the following 525-residue polypeptide: Peptide chain release factor 3 (525 aa).

The tr-type G domain maps to 9-276 (AKRRTFAIIS…GFTRYAPAPQ (268 aa)). GTP-binding positions include 18–25 (SHPDAGKT), 86–90 (DTPGH), and 140–143 (NKFD).

Belongs to the TRAFAC class translation factor GTPase superfamily. Classic translation factor GTPase family. PrfC subfamily.

The protein resides in the cytoplasm. In terms of biological role, increases the formation of ribosomal termination complexes and stimulates activities of RF-1 and RF-2. It binds guanine nucleotides and has strong preference for UGA stop codons. It may interact directly with the ribosome. The stimulation of RF-1 and RF-2 is significantly reduced by GTP and GDP, but not by GMP. This chain is Peptide chain release factor 3, found in Francisella tularensis subsp. holarctica (strain FTNF002-00 / FTA).